The primary structure comprises 272 residues: Thiazole synthase (272 aa).

Lys-111 functions as the Schiff-base intermediate with DXP in the catalytic mechanism. Residues Gly-172, 198–199 (AG), and 220–221 (NS) contribute to the 1-deoxy-D-xylulose 5-phosphate site. A disordered region spans residues 249 to 272 (SGRLPRRDQASASSPTTGLVQSPQ). A compositionally biased stretch (polar residues) spans 258 to 272 (ASASSPTTGLVQSPQ).

This sequence belongs to the ThiG family. As to quaternary structure, homotetramer. Forms heterodimers with either ThiH or ThiS.

The protein localises to the cytoplasm. The enzyme catalyses [ThiS sulfur-carrier protein]-C-terminal-Gly-aminoethanethioate + 2-iminoacetate + 1-deoxy-D-xylulose 5-phosphate = [ThiS sulfur-carrier protein]-C-terminal Gly-Gly + 2-[(2R,5Z)-2-carboxy-4-methylthiazol-5(2H)-ylidene]ethyl phosphate + 2 H2O + H(+). The protein operates within cofactor biosynthesis; thiamine diphosphate biosynthesis. In terms of biological role, catalyzes the rearrangement of 1-deoxy-D-xylulose 5-phosphate (DXP) to produce the thiazole phosphate moiety of thiamine. Sulfur is provided by the thiocarboxylate moiety of the carrier protein ThiS. In vitro, sulfur can be provided by H(2)S. The polypeptide is Thiazole synthase (Synechococcus sp. (strain CC9605)).